A 273-amino-acid polypeptide reads, in one-letter code: Endoplasmic reticulum resident protein 27 (273 aa).

The first 25 residues, 1-25, serve as a signal peptide directing secretion; the sequence is MEAAPSRFMFLLFLLTCELAAEVAA. The 114-residue stretch at 39 to 152 folds into the Thioredoxin domain; it reads EPTWLTDVPA…MVTEYNPVTV (114 aa). The N-linked (GlcNAc...) asparagine glycan is linked to N100. Residues 230–233 are PDIA3-binding site; the sequence is DEWD. A Prevents secretion from ER motif is present at residues 270-273; sequence KVEL.

This sequence belongs to the protein disulfide isomerase family. As to quaternary structure, interacts with PDIA3.

The protein resides in the endoplasmic reticulum lumen. Its function is as follows. Specifically binds unfolded proteins and may recruit protein disulfide isomerase PDIA3 to unfolded substrates. Binds protein substrates via a hydrophobic pocket in the C-terminal domain. May play a role in the unfolded stress response. The protein is Endoplasmic reticulum resident protein 27 (ERP27) of Homo sapiens (Human).